The primary structure comprises 208 residues: Interleukin-6 (208 aa).

An N-terminal signal peptide occupies residues 1 to 29 (MNSRFTSAFTPFAVSLGLLLVMTSAFPTP). The N-linked (GlcNAc...) asparagine glycan is linked to asparagine 38. An intrachain disulfide couples cysteine 72 to cysteine 78. Residue serine 81 is modified to Phosphoserine. A disulfide bridge links cysteine 101 with cysteine 111.

This sequence belongs to the IL-6 superfamily. As to quaternary structure, component of a hexamer of two molecules each of IL6, IL6R and IL6ST; first binds to IL6R to associate with the signaling subunit IL6ST. Interacts with IL6R (via the N-terminal ectodomain); this interaction may be affected by IL6R-binding with SORL1, hence decreasing IL6 cis signaling. Interacts with SORL1 (via the N-terminal ectodomain); this interaction leads to IL6 internalization and lysosomal degradation. May form a trimeric complex with the soluble SORL1 ectodomain and soluble IL6R receptor; this interaction might stabilize circulating IL6, hence promoting IL6 trans signaling.

It localises to the secreted. Its function is as follows. Cytokine with a wide variety of biological functions in immunity, tissue regeneration, and metabolism. Binds to IL6R, then the complex associates to the signaling subunit IL6ST/gp130 to trigger the intracellular IL6-signaling pathway. The interaction with the membrane-bound IL6R and IL6ST stimulates 'classic signaling', whereas the binding of IL6 and soluble IL6R to IL6ST stimulates 'trans-signaling'. Alternatively, 'cluster signaling' occurs when membrane-bound IL6:IL6R complexes on transmitter cells activate IL6ST receptors on neighboring receiver cells. In terms of biological role, IL6 is a potent inducer of the acute phase response. Rapid production of IL6 contributes to host defense during infection and tissue injury, but excessive IL6 synthesis is involved in disease pathology. In the innate immune response, is synthesized by myeloid cells, such as macrophages and dendritic cells, upon recognition of pathogens through toll-like receptors (TLRs) at the site of infection or tissue injury. In the adaptive immune response, is required for the differentiation of B cells into immunoglobulin-secreting cells. Plays a major role in the differentiation of CD4(+) T cell subsets. Essential factor for the development of T follicular helper (Tfh) cells that are required for the induction of germinal-center formation. Required to drive naive CD4(+) T cells to the Th17 lineage. Also required for proliferation of myeloma cells and the survival of plasmablast cells. Acts as an essential factor in bone homeostasis and on vessels directly or indirectly by induction of VEGF, resulting in increased angiogenesis activity and vascular permeability. Induces, through 'trans-signaling' and synergistically with IL1B and TNF, the production of VEGF. Involved in metabolic controls, is discharged into the bloodstream after muscle contraction increasing lipolysis and improving insulin resistance. 'Trans-signaling' in central nervous system also regulates energy and glucose homeostasis. Mediates, through GLP-1, crosstalk between insulin-sensitive tissues, intestinal L cells and pancreatic islets to adapt to changes in insulin demand. Also acts as a myokine. Plays a protective role during liver injury, being required for maintenance of tissue regeneration. Also has a pivotal role in iron metabolism by regulating HAMP/hepcidin expression upon inflammation or bacterial infection. Through activation of IL6ST-YAP-NOTCH pathway, induces inflammation-induced epithelial regeneration. This chain is Interleukin-6 (IL6), found in Bos taurus (Bovine).